A 182-amino-acid polypeptide reads, in one-letter code: Ribosome maturation factor RimM (182 aa).

One can recognise a PRC barrel domain in the interval 103–182 (EDEFYWRELF…RIEVDWDPGF (80 aa)).

It belongs to the RimM family. As to quaternary structure, binds ribosomal protein uS19.

The protein localises to the cytoplasm. An accessory protein needed during the final step in the assembly of 30S ribosomal subunit, possibly for assembly of the head region. Essential for efficient processing of 16S rRNA. May be needed both before and after RbfA during the maturation of 16S rRNA. It has affinity for free ribosomal 30S subunits but not for 70S ribosomes. The polypeptide is Ribosome maturation factor RimM (Vibrio vulnificus (strain CMCP6)).